Consider the following 68-residue polypeptide: Large ribosomal subunit protein bL31 (68 aa).

Zn(2+)-binding residues include cysteine 17, cysteine 19, cysteine 37, and cysteine 40.

This sequence belongs to the bacterial ribosomal protein bL31 family. Type A subfamily. In terms of assembly, part of the 50S ribosomal subunit. Zn(2+) is required as a cofactor.

In terms of biological role, binds the 23S rRNA. The protein is Large ribosomal subunit protein bL31 of Dehalococcoides mccartyi (strain CBDB1).